We begin with the raw amino-acid sequence, 101 residues long: Small ribosomal subunit protein bS18c (101 aa).

It belongs to the bacterial ribosomal protein bS18 family. As to quaternary structure, part of the 30S ribosomal subunit.

It localises to the plastid. The protein resides in the chloroplast. The polypeptide is Small ribosomal subunit protein bS18c (Eucalyptus globulus subsp. globulus (Tasmanian blue gum)).